The primary structure comprises 296 residues: MFGFLNLHKPLHLTSHDCVAKVRRLLRQKRVGHGGTLDPLAEGVLPLAVGSATRLLPYLPGAKQYQALIRFGVRTDSDDLAGEVLESKNVSYLTLAAVEQILPTFLGEIEQIPPQYSAIQVNGKRLYELARAGIPQAVPSRMVTINDLKILGWRSGNQPELDLQVTCGEGTYIRALARDLGDRLGTGATLAGLVRQQSGGMALDNSVGLTALEKIVAEEEHIPLIPPQEALSHLPTVQLNSELEKRWFHGQRLLLPDLPVGVVLITSELGPVKCLGVALVTPEDHGTVLRPKVVLN.

The active-site Nucleophile is Asp38.

It belongs to the pseudouridine synthase TruB family. Type 1 subfamily.

It carries out the reaction uridine(55) in tRNA = pseudouridine(55) in tRNA. In terms of biological role, responsible for synthesis of pseudouridine from uracil-55 in the psi GC loop of transfer RNAs. The chain is tRNA pseudouridine synthase B from Synechocystis sp. (strain ATCC 27184 / PCC 6803 / Kazusa).